A 373-amino-acid polypeptide reads, in one-letter code: Dual-specificity RNA methyltransferase RlmN (373 aa).

Glutamate 94 (proton acceptor) is an active-site residue. Residues 100–339 form the Radical SAM core domain; it reads EDDRATLCVS…VTIRKTRGDD (240 aa). Cysteine 107 and cysteine 344 are oxidised to a cystine. Residues cysteine 114, cysteine 118, and cysteine 121 each contribute to the [4Fe-4S] cluster site. Residues 168-169, serine 200, 222-224, and asparagine 301 contribute to the S-adenosyl-L-methionine site; these read GE and SLH. Cysteine 344 (S-methylcysteine intermediate) is an active-site residue.

It belongs to the radical SAM superfamily. RlmN family. [4Fe-4S] cluster serves as cofactor.

The protein localises to the cytoplasm. It catalyses the reaction adenosine(2503) in 23S rRNA + 2 reduced [2Fe-2S]-[ferredoxin] + 2 S-adenosyl-L-methionine = 2-methyladenosine(2503) in 23S rRNA + 5'-deoxyadenosine + L-methionine + 2 oxidized [2Fe-2S]-[ferredoxin] + S-adenosyl-L-homocysteine. It carries out the reaction adenosine(37) in tRNA + 2 reduced [2Fe-2S]-[ferredoxin] + 2 S-adenosyl-L-methionine = 2-methyladenosine(37) in tRNA + 5'-deoxyadenosine + L-methionine + 2 oxidized [2Fe-2S]-[ferredoxin] + S-adenosyl-L-homocysteine. In terms of biological role, specifically methylates position 2 of adenine 2503 in 23S rRNA and position 2 of adenine 37 in tRNAs. m2A2503 modification seems to play a crucial role in the proofreading step occurring at the peptidyl transferase center and thus would serve to optimize ribosomal fidelity. In Vibrio cholerae serotype O1 (strain M66-2), this protein is Dual-specificity RNA methyltransferase RlmN.